The sequence spans 371 residues: Chaperone protein DnaJ (371 aa).

The region spanning 5 to 69 (DYYEVLGLSK…QKRAQYDQFG (65 aa)) is the J domain. The segment at 133–215 (GKELNVEIPV…CHGSSKVRKR (83 aa)) adopts a CR-type zinc-finger fold. Zn(2+) is bound by residues cysteine 146, cysteine 149, cysteine 163, cysteine 166, cysteine 189, cysteine 192, cysteine 203, and cysteine 206. 4 CXXCXGXG motif repeats span residues 146–153 (CDTCKGSG), 163–170 (CKHCSGSG), 189–196 (CGHCSGTG), and 203–210 (CTTCHGSS).

This sequence belongs to the DnaJ family. As to quaternary structure, homodimer. Zn(2+) serves as cofactor.

The protein localises to the cytoplasm. Its function is as follows. Participates actively in the response to hyperosmotic and heat shock by preventing the aggregation of stress-denatured proteins and by disaggregating proteins, also in an autonomous, DnaK-independent fashion. Unfolded proteins bind initially to DnaJ; upon interaction with the DnaJ-bound protein, DnaK hydrolyzes its bound ATP, resulting in the formation of a stable complex. GrpE releases ADP from DnaK; ATP binding to DnaK triggers the release of the substrate protein, thus completing the reaction cycle. Several rounds of ATP-dependent interactions between DnaJ, DnaK and GrpE are required for fully efficient folding. Also involved, together with DnaK and GrpE, in the DNA replication of plasmids through activation of initiation proteins. The protein is Chaperone protein DnaJ of Bacillus cereus (strain ATCC 14579 / DSM 31 / CCUG 7414 / JCM 2152 / NBRC 15305 / NCIMB 9373 / NCTC 2599 / NRRL B-3711).